Here is a 583-residue protein sequence, read N- to C-terminus: Radixin (583 aa).

Residues 5-295 (INVRVTTMDA…GNHELYMRRR (291 aa)) enclose the FERM domain. Residues 60-63 (KLNK) and Lys-278 each bind a 1,2-diacyl-sn-glycero-3-phospho-(1D-myo-inositol). Disordered regions lie at residues 310–336 (REEK…AEKE) and 436–527 (KKKE…VKKQ). Composition is skewed to basic and acidic residues over residues 436–447 (KKKEEEASEWQH) and 455–464 (DLEKTKEELK). The span at 469–480 (APPPPPPPPVIP) shows a compositional bias: pro residues. Basic and acidic residues-rich tracts occupy residues 483–492 (ENEHDEHDEN) and 506–525 (MNHR…ERVK).

It localises to the cell membrane. The protein localises to the cytoplasm. It is found in the cytoskeleton. Functionally, probably plays a crucial role in the binding of the barbed end of actin filaments to the plasma membrane. The chain is Radixin (RDX) from Gallus gallus (Chicken).